Consider the following 33-residue polypeptide: rho operon leader peptide (33 aa).

Residues 1–25 are compositionally biased toward polar residues; it reads MRSEQISGSSLNPSCRFSSAYSPVT. Positions 1–33 are disordered; it reads MRSEQISGSSLNPSCRFSSAYSPVTRQRKDMSR.

This is rho operon leader peptide (rhoL) from Escherichia coli O157:H7.